A 329-amino-acid polypeptide reads, in one-letter code: UDP-glucose 4-epimerase (329 aa).

NAD(+) is bound by residues 13–14 (YV), 33–38 (HNLSTG), 53–54 (DI), 76–80 (FAAFS), Asn95, Thr120, Tyr144, Lys148, and Phe172. Substrate contacts are provided by Thr120 and Tyr144. Tyr144 (proton acceptor) is an active-site residue. Substrate is bound by residues Asn173, 190 to 191 (HL), 207 to 209 (SVY), Arg221, and 281 to 284 (RGRD).

This sequence belongs to the NAD(P)-dependent epimerase/dehydratase family. As to quaternary structure, homodimer. NAD(+) serves as cofactor.

It carries out the reaction UDP-alpha-D-glucose = UDP-alpha-D-galactose. Its pathway is carbohydrate metabolism; galactose metabolism. In terms of biological role, involved in the metabolism of galactose. Catalyzes the conversion of UDP-galactose (UDP-Gal) to UDP-glucose (UDP-Glc) through a mechanism involving the transient reduction of NAD. The polypeptide is UDP-glucose 4-epimerase (galE) (Streptomyces lividans).